Reading from the N-terminus, the 715-residue chain is Polyribonucleotide nucleotidyltransferase (715 aa).

2 residues coordinate Mg(2+): aspartate 495 and aspartate 501. The KH domain maps to 562–621 (PRLLTLQIPPDMIGLVIGPGGKTVRGISEQYNVKVDISEEGLVTITAPNETNAKQARAAI). An S1 motif domain is found at 631–699 (GDVYLGRVTR…SKGRINLTRL (69 aa)).

Belongs to the polyribonucleotide nucleotidyltransferase family. It depends on Mg(2+) as a cofactor.

It is found in the cytoplasm. The catalysed reaction is RNA(n+1) + phosphate = RNA(n) + a ribonucleoside 5'-diphosphate. Functionally, involved in mRNA degradation. Catalyzes the phosphorolysis of single-stranded polyribonucleotides processively in the 3'- to 5'-direction. The chain is Polyribonucleotide nucleotidyltransferase from Thermosynechococcus vestitus (strain NIES-2133 / IAM M-273 / BP-1).